The chain runs to 72 residues: Translation initiation factor IF-1 (72 aa).

The S1-like domain maps to 1 to 72 (MAKDDVIEVE…TRGRITYRFK (72 aa)).

The protein belongs to the IF-1 family. Component of the 30S ribosomal translation pre-initiation complex which assembles on the 30S ribosome in the order IF-2 and IF-3, IF-1 and N-formylmethionyl-tRNA(fMet); mRNA recruitment can occur at any time during PIC assembly.

The protein resides in the cytoplasm. Functionally, one of the essential components for the initiation of protein synthesis. Stabilizes the binding of IF-2 and IF-3 on the 30S subunit to which N-formylmethionyl-tRNA(fMet) subsequently binds. Helps modulate mRNA selection, yielding the 30S pre-initiation complex (PIC). Upon addition of the 50S ribosomal subunit IF-1, IF-2 and IF-3 are released leaving the mature 70S translation initiation complex. The sequence is that of Translation initiation factor IF-1 from Streptococcus pneumoniae serotype 2 (strain D39 / NCTC 7466).